We begin with the raw amino-acid sequence, 213 residues long: Methylthioribulose-1-phosphate dehydratase (213 aa).

The Zn(2+) site is built by His104 and His106.

This sequence belongs to the aldolase class II family. MtnB subfamily. Requires Zn(2+) as cofactor.

It catalyses the reaction 5-(methylsulfanyl)-D-ribulose 1-phosphate = 5-methylsulfanyl-2,3-dioxopentyl phosphate + H2O. It functions in the pathway amino-acid biosynthesis; L-methionine biosynthesis via salvage pathway; L-methionine from S-methyl-5-thio-alpha-D-ribose 1-phosphate: step 2/6. Catalyzes the dehydration of methylthioribulose-1-phosphate (MTRu-1-P) into 2,3-diketo-5-methylthiopentyl-1-phosphate (DK-MTP-1-P). This is Methylthioribulose-1-phosphate dehydratase from Stenotrophomonas maltophilia (strain R551-3).